We begin with the raw amino-acid sequence, 176 residues long: Large ribosomal subunit protein uL6 (176 aa).

Belongs to the universal ribosomal protein uL6 family. In terms of assembly, part of the 50S ribosomal subunit.

Functionally, this protein binds to the 23S rRNA, and is important in its secondary structure. It is located near the subunit interface in the base of the L7/L12 stalk, and near the tRNA binding site of the peptidyltransferase center. The protein is Large ribosomal subunit protein uL6 of Burkholderia ambifaria (strain ATCC BAA-244 / DSM 16087 / CCUG 44356 / LMG 19182 / AMMD) (Burkholderia cepacia (strain AMMD)).